A 220-amino-acid chain; its full sequence is Ribosome maturation factor RimP (220 aa).

The segment at 173–220 is disordered; sequence KKDKEERRQRKKARRRGEKGGVGDDGTAGEEQPDSAREGPARSASEGE.

The protein belongs to the RimP family.

The protein localises to the cytoplasm. In terms of biological role, required for maturation of 30S ribosomal subunits. The protein is Ribosome maturation factor RimP of Chelativorans sp. (strain BNC1).